Reading from the N-terminus, the 127-residue chain is Mini-ribonuclease 3-like protein (127 aa).

Residue Asp-19 is part of the active site.

The protein belongs to the MrnC RNase family.

In terms of biological role, might be a ribonuclease involved in RNA processing. This is Mini-ribonuclease 3-like protein (mrnCL) from Ilyobacter polytropus (strain ATCC 51220 / DSM 2926 / LMG 16218 / CuHBu1).